We begin with the raw amino-acid sequence, 473 residues long: Serine palmitoyltransferase 1 (473 aa).

The Lumenal segment spans residues 1–15 (MATATEQWVLVEMVQ). The interval 1–66 (MATATEQWVL…KEELIEEWQP (66 aa)) is interaction with SPTLC2. Residues 16–36 (ALYEAPAYHLILEGILILWII) traverse the membrane as a helical segment. Residues 37-473 (RLLFSKTYKL…IKEVAQAVLL (437 aa)) are Cytoplasmic-facing. A Phosphotyrosine; by ABL modification is found at Tyr164.

It belongs to the class-II pyridoxal-phosphate-dependent aminotransferase family. In terms of assembly, component of the serine palmitoyltransferase (SPT) complex, which is also composed of SPTLC2 or SPTLC3 and SPTSSA or SPTSSB. The heterodimer consisting of SPTLC1 and SPTLC2/SPTLC3 forms the catalytic core of the enzyme, while SPTSSA or SPTSSB subunits determine substrate specificity. SPT also interacts with ORMDL proteins, especially ORMDL3, which negatively regulate SPT activity in the presence of ceramides. Forms dimers of heterodimers with SPTLC2. Interacts with RTN4 (isoform B). Pyridoxal 5'-phosphate is required as a cofactor. Post-translationally, phosphorylation at Tyr-164 inhibits activity and promotes cell survival. As to expression, widely expressed. Not detected in small intestine.

It is found in the endoplasmic reticulum membrane. The catalysed reaction is L-serine + hexadecanoyl-CoA + H(+) = 3-oxosphinganine + CO2 + CoA. It carries out the reaction octadecanoyl-CoA + L-serine + H(+) = 3-oxoeicosasphinganine + CO2 + CoA. The enzyme catalyses tetradecanoyl-CoA + L-serine + H(+) = 3-oxohexadecasphinganine + CO2 + CoA. It catalyses the reaction dodecanoyl-CoA + L-serine + H(+) = 3-oxotetradecasphinganine + CO2 + CoA. The protein operates within lipid metabolism; sphingolipid metabolism. Its activity is regulated as follows. SPT complex catalytic activity is negatively regulated by ORMDL proteins, including ORMDL3, in the presence of ceramides. This mechanism allows to maintain ceramide levels at sufficient concentrations for the production of complex sphingolipids, but which prevents the accumulation of ceramides to levels that trigger apoptosis. In terms of biological role, component of the serine palmitoyltransferase multisubunit enzyme (SPT) that catalyzes the initial and rate-limiting step in sphingolipid biosynthesis by condensing L-serine and activated acyl-CoA (most commonly palmitoyl-CoA) to form long-chain bases. The SPT complex is also composed of SPTLC2 or SPTLC3 and SPTSSA or SPTSSB. Within this complex, the heterodimer with SPTLC2 or SPTLC3 forms the catalytic core. The composition of the serine palmitoyltransferase (SPT) complex determines the substrate preference. The SPTLC1-SPTLC2-SPTSSA complex shows a strong preference for C16-CoA substrate, while the SPTLC1-SPTLC3-SPTSSA isozyme uses both C14-CoA and C16-CoA as substrates, with a slight preference for C14-CoA. The SPTLC1-SPTLC2-SPTSSB complex shows a strong preference for C18-CoA substrate, while the SPTLC1-SPTLC3-SPTSSB isozyme displays an ability to use a broader range of acyl-CoAs, without apparent preference. Required for adipocyte cell viability and metabolic homeostasis. The polypeptide is Serine palmitoyltransferase 1 (SPTLC1) (Homo sapiens (Human)).